A 213-amino-acid chain; its full sequence is Hemolysin-3 homolog (213 aa).

A run of 7 helical transmembrane segments spans residues 11–31 (AITH…LIIF), 41–61 (IVSF…STLL), 75–95 (IIDH…FLLG), 103–123 (FTLL…KIFF), 127–147 (FILL…IAVK), 157–177 (GFSL…FYIW), and 185–205 (AIWH…VLFY).

It belongs to the UPF0073 (Hly-III) family.

It localises to the cell membrane. This chain is Hemolysin-3 homolog (yplQ), found in Bacillus subtilis (strain 168).